The chain runs to 230 residues: ATP phosphoribosyltransferase (230 aa).

The protein belongs to the ATP phosphoribosyltransferase family. Short subfamily. As to quaternary structure, heteromultimer composed of HisG and HisZ subunits.

The protein resides in the cytoplasm. It catalyses the reaction 1-(5-phospho-beta-D-ribosyl)-ATP + diphosphate = 5-phospho-alpha-D-ribose 1-diphosphate + ATP. It functions in the pathway amino-acid biosynthesis; L-histidine biosynthesis; L-histidine from 5-phospho-alpha-D-ribose 1-diphosphate: step 1/9. In terms of biological role, catalyzes the condensation of ATP and 5-phosphoribose 1-diphosphate to form N'-(5'-phosphoribosyl)-ATP (PR-ATP). Has a crucial role in the pathway because the rate of histidine biosynthesis seems to be controlled primarily by regulation of HisG enzymatic activity. The polypeptide is ATP phosphoribosyltransferase (hisG) (Chelativorans sp. (strain BNC1)).